We begin with the raw amino-acid sequence, 134 residues long: Cytochrome b5 (134 aa).

The residue at position 2 (alanine 2) is an N-acetylalanine. N6-acetyllysine is present on residues lysine 7, lysine 10, and lysine 19. The Cytochrome b5 heme-binding domain maps to valine 9–histidine 85. 2 residues coordinate heme: histidine 44 and histidine 68. Residues tryptophan 109–methionine 131 form a helical membrane-spanning segment.

Belongs to the cytochrome b5 family.

The protein resides in the endoplasmic reticulum membrane. Its subcellular location is the microsome membrane. Its function is as follows. Cytochrome b5 is a membrane-bound hemoprotein functioning as an electron carrier for several membrane-bound oxygenases. It is also involved in several steps of the sterol biosynthesis pathway, particularly in the C-5 double bond introduction during the C-5 desaturation. The sequence is that of Cytochrome b5 (Cyb5a) from Mus musculus (Mouse).